The sequence spans 478 residues: Cytochrome c-552 (478 aa).

Residues 1–26 (MARKTLRARRFFSLIFPFFFITSVYA) form the signal peptide. Heme c is bound at residue H94. C122, C125, and K126 together coordinate heme. The heme c site is built by C160, C163, H164, C209, C212, and H213. E215, Y216, K261, and Q263 together coordinate Ca(2+). Y216 contributes to the substrate binding site. Position 264 (H264) interacts with substrate. Positions 275, 282, 285, 286, 301, 314, 317, 318, and 393 each coordinate heme c.

Belongs to the cytochrome c-552 family. The cofactor is Ca(2+). Heme c serves as cofactor.

The protein localises to the periplasm. It catalyses the reaction 6 Fe(III)-[cytochrome c] + NH4(+) + 2 H2O = 6 Fe(II)-[cytochrome c] + nitrite + 8 H(+). The protein operates within nitrogen metabolism; nitrate reduction (assimilation). Functionally, catalyzes the reduction of nitrite to ammonia, consuming six electrons in the process. This chain is Cytochrome c-552, found in Salmonella gallinarum (strain 287/91 / NCTC 13346).